The chain runs to 447 residues: NADP-specific glutamate dehydrogenase (447 aa).

Positions 92, 113, and 116 each coordinate substrate. The Proton donor role is filled by Lys-128. Gly-167 contacts substrate. Residues Thr-211 and Asn-242 each contribute to the NADP(+) site. Ser-380 is a substrate binding site.

The protein belongs to the Glu/Leu/Phe/Val dehydrogenases family. Homohexamer.

It catalyses the reaction L-glutamate + NADP(+) + H2O = 2-oxoglutarate + NH4(+) + NADPH + H(+). Catalyzes the reversible oxidative deamination of glutamate to alpha-ketoglutarate and ammonia. In Salmonella typhimurium (strain LT2 / SGSC1412 / ATCC 700720), this protein is NADP-specific glutamate dehydrogenase (gdhA).